Here is a 108-residue protein sequence, read N- to C-terminus: Small ribosomal subunit protein bS16 (108 aa).

The interval 82–108 (ESKFSKNTQTENKKPVSKKTTKKSKDN) is disordered. Basic residues predominate over residues 96–108 (PVSKKTTKKSKDN).

The protein belongs to the bacterial ribosomal protein bS16 family.

The protein is Small ribosomal subunit protein bS16 of Mycoplasma capricolum subsp. capricolum (strain California kid / ATCC 27343 / NCTC 10154).